Reading from the N-terminus, the 79-residue chain is Omega-phylotoxin-To1a (79 aa).

The first 21 residues, 1-21, serve as a signal peptide directing secretion; the sequence is MKKTFCFILILVCIVLKSVNA. The propeptide occupies 22-38; sequence EEEDNFEESSLEMETAR. 4 disulfide bridges follow: cysteine 39–cysteine 59, cysteine 46–cysteine 63, cysteine 58–cysteine 78, and cysteine 65–cysteine 76.

Expressed by the venom duct.

The protein localises to the secreted. In terms of biological role, insect-specific toxin that probably acts as an inhibitor of presynaptic insect calcium channels, presumably Cav2 subtype. In vivo, induces immediate paralysis on insects, followed by death when high doses are injected. This chain is Omega-phylotoxin-To1a, found in Tibellus oblongus (Oblong running crab spider).